A 188-amino-acid polypeptide reads, in one-letter code: UPF0232 protein RHA1_ro03670 (188 aa).

Disordered regions lie at residues 1–20 (MTDD…PEVK), 31–78 (EARA…QPFG), and 166–188 (PTAP…DTYG). The segment covering 7–16 (PTAPAAAAPE) has biased composition (low complexity).

It belongs to the UPF0232 family.

The sequence is that of UPF0232 protein RHA1_ro03670 from Rhodococcus jostii (strain RHA1).